A 152-amino-acid polypeptide reads, in one-letter code: CASP-like protein 5B1 (152 aa).

Residues Met-1–Met-11 are Cytoplasmic-facing. A helical transmembrane segment spans residues Ser-12–Val-32. Over Ser-33–Ala-42 the chain is Extracellular. A glycan (N-linked (GlcNAc...) asparagine) is linked at Asn-39. The chain crosses the membrane as a helical span at residues Phe-43 to Leu-63. Topologically, residues Asp-64 to Pro-77 are cytoplasmic. A helical transmembrane segment spans residues Ile-78–Ala-98. Residues Cys-99 to Gly-131 are Extracellular-facing. Residues Leu-132 to Ile-152 form a helical membrane-spanning segment.

Belongs to the Casparian strip membrane proteins (CASP) family. As to quaternary structure, homodimer and heterodimers. As to expression, expressed in leaves, exclusively in hair cells (e.g. differentiated trichomes and immature cells).

The protein localises to the cell membrane. The sequence is that of CASP-like protein 5B1 from Arabidopsis thaliana (Mouse-ear cress).